The primary structure comprises 275 residues: S-formylglutathione hydrolase (275 aa).

Active-site charge relay system residues include Ser145, Asp221, and His254.

It belongs to the esterase D family.

The catalysed reaction is S-formylglutathione + H2O = formate + glutathione + H(+). Its function is as follows. Serine hydrolase involved in the detoxification of formaldehyde. Hydrolyzes S-formylglutathione to glutathione and formate. This Haemophilus influenzae (strain ATCC 51907 / DSM 11121 / KW20 / Rd) protein is S-formylglutathione hydrolase.